Reading from the N-terminus, the 652-residue chain is Endoplasmic reticulum chaperone BiP (652 aa).

A signal peptide spans 1 to 16 (MRHLLLALLLLGGARA). Residues 34–37 (GTTY), K94, 225–227 (GGT), 291–298 (EKAKRALS), and 362–365 (GSTR) contribute to the ATP site. The tract at residues 123-278 (KPHIQVDVGG…KKKTGKDVRK (156 aa)) is nucleotide-binding (NBD). The tract at residues 407-417 (QDTGDLVLLDV) is interdomain linker. Positions 418 to 498 (CPLTLGIETV…PRGVPQIEVT (81 aa)) are substrate-binding (SBD). Residues 630-652 (SKLYGSAGPPPTGEEEAAEKDEL) are disordered. Residues 642 to 652 (GEEEAAEKDEL) are compositionally biased toward acidic residues. The short motif at 649–652 (KDEL) is the Prevents secretion from ER element.

The protein belongs to the heat shock protein 70 family. In terms of assembly, monomer and homooligomer; homooligomerization via the interdomain linker inactivates the chaperone activity and acts as a storage of HSPA5/BiP molecules. Interacts with DNAJC10. Interacts with DNAJB9/ERdj4; leading to recruit HSPA5/BiP to ERN1/IRE1. Interacts with ERN1/IRE1; interaction takes place following interaction with DNAJB9/ERdj4 and leads to inactivate ERN1/IRE1.

The protein localises to the endoplasmic reticulum lumen. Its subcellular location is the melanosome. It is found in the cytoplasm. It localises to the cell surface. It catalyses the reaction ATP + H2O = ADP + phosphate + H(+). With respect to regulation, the chaperone activity is regulated by ATP-induced allosteric coupling of the nucleotide-binding (NBD) and substrate-binding (SBD) domains. In the ADP-bound and nucleotide-free (apo) states, the two domains have little interaction. In contrast, in the ATP-bound state the two domains are tightly coupled, which results in drastically accelerated kinetics in both binding and release of polypeptide substrates. J domain-containing co-chaperones (DNAJB9/ERdj4 or DNAJC10/ERdj5) stimulate the ATPase activity and are required for efficient substrate recognition by HSPA5/BiP. Homooligomerization inactivates participating HSPA5/BiP protomers and probably act as reservoirs to store HSPA5/BiP molecules when they are not needed by the cell. Its function is as follows. Endoplasmic reticulum chaperone that plays a key role in protein folding and quality control in the endoplasmic reticulum lumen. Involved in the correct folding of proteins and degradation of misfolded proteins via its interaction with DNAJC10/ERdj5, probably to facilitate the release of DNAJC10/ERdj5 from its substrate. Acts as a key repressor of the EIF2AK3/PERK and ERN1/IRE1-mediated unfolded protein response (UPR). In the unstressed endoplasmic reticulum, recruited by DNAJB9/ERdj4 to the luminal region of ERN1/IRE1, leading to disrupt the dimerization of ERN1/IRE1, thereby inactivating ERN1/IRE1. Also binds and inactivates EIF2AK3/PERK in unstressed cells. Accumulation of misfolded protein in the endoplasmic reticulum causes release of HSPA5/BiP from ERN1/IRE1 and EIF2AK3/PERK, allowing their homodimerization and subsequent activation. May also play a role in apoptosis and cell proliferation. This is Endoplasmic reticulum chaperone BiP from Gallus gallus (Chicken).